The following is a 602-amino-acid chain: 3-hydroxy-3-methylglutaryl-coenzyme A reductase 2 (602 aa).

The next 2 helical transmembrane spans lie at 44-67 and 95-115; these read ASDA…FFSV and AIVS…IGFV. The interval 116-187 is linker; sequence QTFVSRGNND…PLITSASSGE (72 aa). Residue asparagine 124 is glycosylated (N-linked (GlcNAc...) asparagine). The segment at 188 to 602 is catalytic; the sequence is DEEIIKSVVQ…STKDVTKASS (415 aa). Catalysis depends on glutamate 281, which acts as the Charge relay system. An N-linked (GlcNAc...) asparagine glycan is attached at asparagine 345. Lysine 413 serves as the catalytic Charge relay system. N-linked (GlcNAc...) asparagine glycosylation is present at asparagine 458. Aspartate 489 serves as the catalytic Charge relay system. Histidine 587 acts as the Proton donor in catalysis. The N-linked (GlcNAc...) asparagine glycan is linked to asparagine 591.

The protein belongs to the HMG-CoA reductase family.

The protein resides in the endoplasmic reticulum membrane. The catalysed reaction is (R)-mevalonate + 2 NADP(+) + CoA = (3S)-3-hydroxy-3-methylglutaryl-CoA + 2 NADPH + 2 H(+). It participates in metabolic intermediate biosynthesis; (R)-mevalonate biosynthesis; (R)-mevalonate from acetyl-CoA: step 3/3. Catalyzes the synthesis of mevalonate. The specific precursor of all isoprenoid compounds present in plants. In Solanum lycopersicum (Tomato), this protein is 3-hydroxy-3-methylglutaryl-coenzyme A reductase 2 (HMG2).